Consider the following 86-residue polypeptide: Putative pro-MCH-like protein 2 (86 aa).

Positions 31–49 are NGE-like; the sequence is GSVAFPAENGVQDTESTLE. Residues 40–60 form a disordered region; sequence GVQDTESTLEKRETGDEENSA. An NEI-like region spans residues 52 to 64; it reads ETGDEENSAKFPI. The segment at 68-86 is melanin-concentrating hormone-like; that stretch reads DFDTLRCMLGRVYQRCWQV.

The protein belongs to the melanin-concentrating hormone family. In terms of tissue distribution, expressed in testis but not in brain.

This is Putative pro-MCH-like protein 2 (PMCHL2) from Homo sapiens (Human).